Consider the following 517-residue polypeptide: Maturase K (517 aa).

The protein belongs to the intron maturase 2 family. MatK subfamily.

The protein localises to the plastid. The protein resides in the chloroplast. Its function is as follows. Usually encoded in the trnK tRNA gene intron. Probably assists in splicing its own and other chloroplast group II introns. The protein is Maturase K of Dracula chimaera.